Here is a 326-residue protein sequence, read N- to C-terminus: MARNATNKLLHKAKKSKSDEFYTQYCDIENELQYYREHFSDKVVYCNCDDPRVSNFFKYFAVNFDNLGLKKLIASCYVENKEGFSSSEAAKNGFYYEYHKENGKKLVFDDISVSSFCGDGDFRSSESIDLLKKSDIVVTNPPFSLFREYLDQLIKYDKKFLIIANVNSITYKEVFNLIKENKIWLGVHLGRGVSGFIVPEHYELYGTEARIDSNGNRIISPNNCLWLTNLDVFIRHKDLPLTRKYFGNESSYPKYDNYDAINVNKTKDIPLDYNGVMGVPITFLHKFNPEQFELIKFRKGVDEKDLSINGKCPYFRILIKNKRLQK.

Belongs to the N(4)/N(6)-methyltransferase family. Monomer.

The catalysed reaction is a 2'-deoxyadenosine in DNA + S-adenosyl-L-methionine = an N(6)-methyl-2'-deoxyadenosine in DNA + S-adenosyl-L-homocysteine + H(+). A methylase that recognizes the double-stranded sequence 5'-GAATTC-3', methylates A-3 on both strands, and protects the DNA from cleavage by the EcoRI endonuclease. The chain is Type II methyltransferase M.EcoRI (ecoRIM) from Escherichia coli.